The primary structure comprises 563 residues: Sulfite reductase [NADPH] hemoprotein beta-component (563 aa).

[4Fe-4S] cluster is bound by residues Cys-427, Cys-433, Cys-472, and Cys-476. Cys-476 provides a ligand contact to siroheme.

Belongs to the nitrite and sulfite reductase 4Fe-4S domain family. As to quaternary structure, alpha(8)-beta(8). The alpha component is a flavoprotein, the beta component is a hemoprotein. Siroheme is required as a cofactor. The cofactor is [4Fe-4S] cluster.

It carries out the reaction hydrogen sulfide + 3 NADP(+) + 3 H2O = sulfite + 3 NADPH + 4 H(+). It participates in sulfur metabolism; hydrogen sulfide biosynthesis; hydrogen sulfide from sulfite (NADPH route): step 1/1. Functionally, component of the sulfite reductase complex that catalyzes the 6-electron reduction of sulfite to sulfide. This is one of several activities required for the biosynthesis of L-cysteine from sulfate. The polypeptide is Sulfite reductase [NADPH] hemoprotein beta-component (Acidithiobacillus ferrooxidans (strain ATCC 53993 / BNL-5-31) (Leptospirillum ferrooxidans (ATCC 53993))).